A 331-amino-acid polypeptide reads, in one-letter code: tRNA U34 carboxymethyltransferase (331 aa).

Carboxy-S-adenosyl-L-methionine is bound by residues Lys-91, Trp-105, Lys-110, Gly-130, 152–154 (DPS), 181–182 (IE), Met-196, Tyr-200, and Arg-315.

It belongs to the class I-like SAM-binding methyltransferase superfamily. CmoB family. Homotetramer.

It catalyses the reaction carboxy-S-adenosyl-L-methionine + 5-hydroxyuridine(34) in tRNA = 5-carboxymethoxyuridine(34) in tRNA + S-adenosyl-L-homocysteine + H(+). Catalyzes carboxymethyl transfer from carboxy-S-adenosyl-L-methionine (Cx-SAM) to 5-hydroxyuridine (ho5U) to form 5-carboxymethoxyuridine (cmo5U) at position 34 in tRNAs. The polypeptide is tRNA U34 carboxymethyltransferase (Shewanella baltica (strain OS155 / ATCC BAA-1091)).